Reading from the N-terminus, the 415-residue chain is Leucine-rich repeat-containing protein 34 (415 aa).

LRR repeat units lie at residues 246–272 (SLRY…LKSN) and 274–296 (TLEV…LSET).

As to quaternary structure, interacts with NPM1 and NCL. Expressed in testis where it specifically localizes to germ cells (at protein level). Not detected in other tissues tested (at protein level). Expressed in pluripotent embryonic stem cells and multipotent adult germline stem cells.

It is found in the nucleus. The protein resides in the nucleolus. It localises to the cytoplasm. Functionally, highly expressed in stem cells where it may be involved in regulation of pluripotency. In embryonic stem cells (ESCs), important for normal expression of the pluripotency regulators POU5F1/OCT4 and KLF4. Also important for expression of the ectodermal marker gene NES and the endodermal marker gene GATA4. Promotes stem cell proliferation in vitro. In Mus musculus (Mouse), this protein is Leucine-rich repeat-containing protein 34.